We begin with the raw amino-acid sequence, 519 residues long: Protein tweety homolog 1 (519 aa).

Residues 1–42 are Extracellular-facing; that stretch reads MTFASFLINFYSVIPRLNFKFHWTNDVFNLEWSSEYFQALAL. Residues 43 to 63 form a helical membrane-spanning segment; that stretch reads VACLGAAVSLLLLVTIIIVWI. The Cytoplasmic segment spans residues 64–82; the sequence is CQACHKNETTGKTRRRVRR. Residues 83–103 form a helical membrane-spanning segment; sequence LSTVLFIISVLCFFMLGVCLF. At 104–217 the chain is on the extracellular side; sequence ANEHVNRGMS…VLSLYESERW (114 aa). Asparagine 142, asparagine 163, and asparagine 176 each carry an N-linked (GlcNAc...) asparagine glycan. The chain crosses the membrane as a helical span at residues 218–238; that stretch reads AFLVILLSITMVVLFTGVVAF. The Cytoplasmic segment spans residues 239 to 245; it reads CKQSKKG. The chain crosses the membrane as a helical span at residues 246 to 266; that stretch reads AVVFSAIGFFIFVVVWLLISI. The Extracellular segment spans residues 267 to 395; sequence SLPLTIALAD…GTCNQSVAGM (129 aa). N-linked (GlcNAc...) asparagine glycans are attached at residues asparagine 328, asparagine 341, asparagine 348, and asparagine 389. A helical membrane pass occupies residues 396–416; sequence SIYMLSILLLGVFLFILLIVV. Residues 417–519 lie on the Cytoplasmic side of the membrane; sequence SKTWNLFSRL…YNNYEDRYNM (103 aa). Residues 459–485 are disordered; it reads YNPRTRDRTEPSTNTTSGTADEPNAPL.

It belongs to the tweety family.

The protein resides in the cell membrane. Probable chloride channel. The sequence is that of Protein tweety homolog 1 (ttyh-1) from Caenorhabditis elegans.